We begin with the raw amino-acid sequence, 415 residues long: Esterase FrsA (415 aa).

This sequence belongs to the FrsA family.

It catalyses the reaction a carboxylic ester + H2O = an alcohol + a carboxylate + H(+). Its function is as follows. Catalyzes the hydrolysis of esters. This is Esterase FrsA from Vibrio parahaemolyticus serotype O3:K6 (strain RIMD 2210633).